The chain runs to 244 residues: MSAFHLETLKSLPKAEQEAALSEANRQLEEMSAEDRLKWAFDNLSGQFVLSSSFGIQAAVMLHLVTRKKADIPVILTDTGYLFPETYRFIDALTEKLDLNLQVFRAALSPAWQEARYGKLWEQGVEGIERYNDINKVEPMNRALKTLEAGTWFAGLRRDQSKSRSHLPILAIQRGVFKFLPIIDWDNRKIHYYLKEHDLPYHPLWDEGYLSVGDTHTTRKWEEGMSEEETRFFGLKRECGLHEG.

Residue C239 is the Nucleophile; cysteine thiosulfonate intermediate of the active site.

Belongs to the PAPS reductase family. CysH subfamily.

It localises to the cytoplasm. The enzyme catalyses [thioredoxin]-disulfide + sulfite + adenosine 3',5'-bisphosphate + 2 H(+) = [thioredoxin]-dithiol + 3'-phosphoadenylyl sulfate. Its pathway is sulfur metabolism; hydrogen sulfide biosynthesis; sulfite from sulfate: step 3/3. Functionally, catalyzes the formation of sulfite from phosphoadenosine 5'-phosphosulfate (PAPS) using thioredoxin as an electron donor. This chain is Phosphoadenosine 5'-phosphosulfate reductase, found in Zymomonas mobilis subsp. mobilis (strain ATCC 31821 / ZM4 / CP4).